A 244-amino-acid chain; its full sequence is 1-(5-phosphoribosyl)-5-[(5-phosphoribosylamino)methylideneamino] imidazole-4-carboxamide isomerase (244 aa).

Asp8 (proton acceptor) is an active-site residue. Catalysis depends on Asp129, which acts as the Proton donor.

It belongs to the HisA/HisF family.

The protein resides in the cytoplasm. It carries out the reaction 1-(5-phospho-beta-D-ribosyl)-5-[(5-phospho-beta-D-ribosylamino)methylideneamino]imidazole-4-carboxamide = 5-[(5-phospho-1-deoxy-D-ribulos-1-ylimino)methylamino]-1-(5-phospho-beta-D-ribosyl)imidazole-4-carboxamide. It participates in amino-acid biosynthesis; L-histidine biosynthesis; L-histidine from 5-phospho-alpha-D-ribose 1-diphosphate: step 4/9. This chain is 1-(5-phosphoribosyl)-5-[(5-phosphoribosylamino)methylideneamino] imidazole-4-carboxamide isomerase, found in Chelativorans sp. (strain BNC1).